The chain runs to 405 residues: Protein held out wings (405 aa).

Positions 142 to 210 (YVPVREHPDF…HLSDDLHVLI (69 aa)) constitute a KH domain.

In terms of assembly, homodimer. Interacts with Sxl; promoting nuclear retention of msl-2 transcripts. During embryogenesis, expression is seen in mesodermal precursors of somatic, visceral and pharyngeal muscle. Later in embryogenesis, expression is restricted to heart and muscle attachment sites of the epidermis. During onset of metamorphosis, expression is seen in muscle and muscle attachment cells.

It localises to the nucleus. Functionally, RNA-binding protein involved in muscle development and dosage compensation. Vital role in steroid regulation of muscle development and to control heart rate. Required during embryogenesis, in late stages of somatic muscle development, for myotube migration and during metamorphosis for muscle reorganization. Required for integrin-mediated cell-adhesion in wing blade. Together with Sxl, acts as an inhibitor of dosage compensation in females by preventing production of msl-2 protein, an essential component of the MSL complex. Specifically binds to the 5'-UTR of msl-2 transcripts and cooperates with Sxl to promote nuclear retention of msl-2 mRNAs. In Drosophila melanogaster (Fruit fly), this protein is Protein held out wings (how).